Reading from the N-terminus, the 931-residue chain is NEDD4-binding protein 1 (931 aa).

The region spanning 75–159 (GKAVRSAKEY…VQQFVKLFEN (85 aa)) is the KH-like domain. Disordered stretches follow at residues 289–329 (MTSK…HNDS), 413–474 (QEWS…TQVD), and 547–571 (CTSAKSKTAVHQKSAGPSPVQNSHS). Composition is skewed to basic and acidic residues over residues 290 to 309 (TSKERQSCKRRFSDAEESLP) and 319 to 329 (QEVKSVSHNDS). Residues 416–434 (SSKTPKTTNLRLGSNANSS) are compositionally biased toward polar residues. Basic and acidic residues-rich tracts occupy residues 435–444 (HKLEDEDISC) and 456–467 (NETRTERHKARD). Positions 547 to 557 (CTSAKSKTAVH) are enriched in polar residues. In terms of domain architecture, RNase NYN spans 659-811 (LKHIIIDGSN…LGRNGPRLDD (153 aa)). A disordered region spans residues 841–863 (LFMHVPNPASSSQQPKNRAHGDH). Positions 884 to 931 (RSASETVWLREALIKIFPDYEQRQKIDKILADHPFMRDLNALSAMVLD) are coCUN.

Belongs to the N4BP1 family.

Its subcellular location is the cytoplasm. It is found in the cytosol. The protein resides in the nucleus. The protein localises to the nucleolus. It localises to the PML body. Functionally, potent suppressor of cytokine production that acts as a regulator of innate immune signaling and inflammation. Acts as a key negative regulator of select cytokine and chemokine responses elicited by TRIF-independent Toll-like receptors (TLRs), thereby limiting inflammatory cytokine responses to minor insults. Has ribonuclease activity. This is NEDD4-binding protein 1 from Gallus gallus (Chicken).